Here is a 142-residue protein sequence, read N- to C-terminus: Galactose-6-phosphate isomerase subunit LacA 2 (142 aa).

It belongs to the LacAB/RpiB family. In terms of assembly, heteromultimeric protein consisting of LacA and LacB.

The catalysed reaction is aldehydo-D-galactose 6-phosphate = keto-D-tagatose 6-phosphate. Its pathway is carbohydrate metabolism; D-galactose 6-phosphate degradation; D-tagatose 6-phosphate from D-galactose 6-phosphate: step 1/1. The chain is Galactose-6-phosphate isomerase subunit LacA 2 from Streptococcus pyogenes serotype M3 (strain ATCC BAA-595 / MGAS315).